We begin with the raw amino-acid sequence, 651 residues long: Probable potassium transport system protein Kup (651 aa).

Transmembrane regions (helical) follow at residues 41 to 61 (LVLGALGVVYGDIGTSPIYAF), 82 to 102 (VVSLIFWALTLVVTVKYVLFV), 130 to 150 (LILGVGICGAALFFGDAVITP), 163 to 183 (IVAPNLTPFVVPATVVILVTL), 194 to 214 (VAIVFGPIMALWFVALGASGL), 235 to 255 (FLTVSPAVAFVTVGAVFLAMT), 276 to 296 (WLWIVFPCLLLNYFGQAAFIL), 309 to 329 (MIPSFALWPMVLLATAATVIA), 366 to 386 (IYIPRVNLLLGLAVVILVLGF), 395 to 415 (AYGIAVTGNMLVTTVLLYIVM), 426 to 446 (ALPIILGFLVIDMLFFSANII), and 450 to 470 (EGGWASIGIATVLVLIMWTWV).

Belongs to the HAK/KUP transporter (TC 2.A.72) family.

It is found in the cell inner membrane. It catalyses the reaction K(+)(in) + H(+)(in) = K(+)(out) + H(+)(out). Its function is as follows. Transport of potassium into the cell. Likely operates as a K(+):H(+) symporter. The protein is Probable potassium transport system protein Kup of Brucella melitensis biotype 1 (strain ATCC 23456 / CCUG 17765 / NCTC 10094 / 16M).